The chain runs to 833 residues: Major vault protein (833 aa).

8 MVP repeats span residues arginine 10 to proline 52, arginine 54 to glutamine 115, proline 119 to tyrosine 170, proline 171 to serine 223, glutamate 224 to asparagine 278, lysine 280 to glycine 328, lysine 329 to aspartate 380, and arginine 381 to threonine 433.

In terms of assembly, the vault ribonucleoprotein particle is a huge (400 A x 670 A) cage structure of 12.9 MDa. It consists of a dimer of half-vaults, with each half-vault comprising 39 identical major vault protein (MVP) chains, PARP4 and one or more vault RNAs (vRNAs).

It localises to the cytoplasm. The protein localises to the nucleus. Functionally, required for normal vault structure. Vaults are multi-subunit structures that may act as scaffolds for proteins involved in signal transduction. Vaults may also play a role in nucleo-cytoplasmic transport. In Leishmania braziliensis, this protein is Major vault protein.